The primary structure comprises 357 residues: Transcription factor unc-86 (357 aa).

Positions 35 to 44 (RAAQVALADI) match the POU-IV box motif. In terms of domain architecture, POU-specific spans 155–232 (DMDTDPRQLE…ILHSWLEKAE (78 aa)). A DNA-binding region (homeobox) is located at residues 253–312 (KKRKRTSIAAPEKRELEQFFKQQPRPSGERIASIADRLDLKKNVVRVWFCNQRQKQKRDF).

The protein belongs to the POU transcription factor family. Class-4 subfamily. Interacts with mec-3; the heterooligomer binds to the promoters of mec-3, mec-4 and mec-7. Specific to neurons and neuroblasts. Expressed in CEM head neurons and in IL2, URA, URB, URX and URY neurons. Not expressed in olfactory sensory neurons but expressed in AIZ interneurons.

The protein resides in the nucleus. Functionally, transcription factor required for correct cell fate determination and differentiation in diverse neuronal cell lineages where it plays a role in specifying the fate of daughter cells during cell divisions. Involved in sensory neuron production and function. Binds both alone and with mec-3 to the mec-3 promoter to initiate and maintain mec-3 expression which is required for sensory neuron differentiation. In addition, binds both alone and with mec-3 to the promoters of mec-4 and mec-7 which act to regulate sensory neuron function. Involved in determining the identity of the serotonergic NSM neurons and the cholinergic IL2 sensory and URA motor neurons. Promotes expression of the cfi-1 transcription factor in the URA and IL2 neurons which in turn activates normal URA and IL2 gene expression. Required to determine the identity of BDU sensory neurons in concert with transcription factor unc-86, regulating expression of a number of genes, including transcription factors ceh-14 and ahr-1, neuropeptides flp-10, nlp-1 and nlp-15, and tyramine receptor-encoding ser-2. Regulates expression of a number of genes in NSM neurons including bas-1, cat-1, dop-3, mgl-3, nlp-13, scd-2 and ptps-1. In the IL2 neurons, required for expression of cho-1, gcy-19, klp-6, lag-2, unc-5 and unc-17. Promotes expression of pkd-2 in the male-specific CEM head neurons. Required for dauer-specific branching of IL2Q neurons and nictation behavior. Controls both the timing and direction of axon outgrowth in HSN neurons. Plays a role in serotonin production by regulating expression of the tryptophan hydrolase tph-1 which catalyzes serotonin synthesis, in the AIM, NSM, HSN and RIH neurons. Involved in regulation of lin-11 expression in the AIZ interneurons, the major interneurons of the olfactory pathway, and is required for odortaxis behavior. Involved in neurite pruning between AIM neurons during larval development by regulating the expression of transcription factor mbr-1. Required for correct localization of unc-40. The sequence is that of Transcription factor unc-86 (unc-86) from Caenorhabditis elegans.